The primary structure comprises 328 residues: 4-hydroxythreonine-4-phosphate dehydrogenase (328 aa).

Residues H134 and T135 each contribute to the substrate site. Positions 164, 209, and 265 each coordinate a divalent metal cation. Substrate is bound by residues K273, N282, and R291.

This sequence belongs to the PdxA family. In terms of assembly, homodimer. Zn(2+) serves as cofactor. It depends on Mg(2+) as a cofactor. Requires Co(2+) as cofactor.

It localises to the cytoplasm. It catalyses the reaction 4-(phosphooxy)-L-threonine + NAD(+) = 3-amino-2-oxopropyl phosphate + CO2 + NADH. The protein operates within cofactor biosynthesis; pyridoxine 5'-phosphate biosynthesis; pyridoxine 5'-phosphate from D-erythrose 4-phosphate: step 4/5. In terms of biological role, catalyzes the NAD(P)-dependent oxidation of 4-(phosphooxy)-L-threonine (HTP) into 2-amino-3-oxo-4-(phosphooxy)butyric acid which spontaneously decarboxylates to form 3-amino-2-oxopropyl phosphate (AHAP). The polypeptide is 4-hydroxythreonine-4-phosphate dehydrogenase (Vibrio vulnificus (strain CMCP6)).